A 597-amino-acid polypeptide reads, in one-letter code: Exochitinase 1 (597 aa).

Positions 1–29 (MDRFRPLAVLIAAALTLSGTTALSSAARA) form a signal peptide, or 32. A Fibronectin type-III domain is found at 172–253 (PPTGLRTGSV…ATVTATTAPG (82 aa)). The GH18 domain maps to 264–597 (HALVGYLHAS…FQRTFDGYFG (334 aa)). The Proton donor role is filled by Glu-384.

Belongs to the glycosyl hydrolase 18 family. Chitinase class II subfamily. In terms of processing, the N-terminus is blocked.

It carries out the reaction Random endo-hydrolysis of N-acetyl-beta-D-glucosaminide (1-&gt;4)-beta-linkages in chitin and chitodextrins.. Its activity is regulated as follows. Inhibited by the pseudosugar allosamidin A. Its function is as follows. Exochitinase that generates exclusively chitobiose from chitotetraose, chitohexaose, and colloidal high-molecular mass chitin. This Streptomyces olivaceoviridis (Streptomyces corchorusii) protein is Exochitinase 1 (chi01).